We begin with the raw amino-acid sequence, 60 residues long: Venom protein 4.1 (60 aa).

An N-terminal signal peptide occupies residues 1–26; sequence MKALCAILLVLFACSVMFEHFSISTA.

Belongs to the non-disulfide-bridged peptide (NDBP) superfamily. In terms of tissue distribution, expressed by the venom gland.

The protein localises to the secreted. This is Venom protein 4.1 from Lychas mucronatus (Chinese swimming scorpion).